The primary structure comprises 1343 residues: DNA-directed RNA polymerase subunit beta (1343 aa).

Belongs to the RNA polymerase beta chain family. As to quaternary structure, the RNAP catalytic core consists of 2 alpha, 1 beta, 1 beta' and 1 omega subunit. When a sigma factor is associated with the core the holoenzyme is formed, which can initiate transcription.

It carries out the reaction RNA(n) + a ribonucleoside 5'-triphosphate = RNA(n+1) + diphosphate. DNA-dependent RNA polymerase catalyzes the transcription of DNA into RNA using the four ribonucleoside triphosphates as substrates. This Haemophilus influenzae (strain PittEE) protein is DNA-directed RNA polymerase subunit beta.